The following is a 158-amino-acid chain: NAD(P)H-quinone oxidoreductase subunit J, chloroplastic (158 aa).

Belongs to the complex I 30 kDa subunit family. In terms of assembly, NDH is composed of at least 16 different subunits, 5 of which are encoded in the nucleus.

The protein localises to the plastid. Its subcellular location is the chloroplast thylakoid membrane. It catalyses the reaction a plastoquinone + NADH + (n+1) H(+)(in) = a plastoquinol + NAD(+) + n H(+)(out). The enzyme catalyses a plastoquinone + NADPH + (n+1) H(+)(in) = a plastoquinol + NADP(+) + n H(+)(out). In terms of biological role, NDH shuttles electrons from NAD(P)H:plastoquinone, via FMN and iron-sulfur (Fe-S) centers, to quinones in the photosynthetic chain and possibly in a chloroplast respiratory chain. The immediate electron acceptor for the enzyme in this species is believed to be plastoquinone. Couples the redox reaction to proton translocation, and thus conserves the redox energy in a proton gradient. This Nymphaea alba (White water-lily) protein is NAD(P)H-quinone oxidoreductase subunit J, chloroplastic.